A 984-amino-acid chain; its full sequence is G patch domain-containing protein TGH homolog (984 aa).

A compositionally biased stretch (basic and acidic residues) spans 130-144 (EHARKQASKEQKERP). Residues 130–153 (EHARKQASKEQKERPSAIPGPIPD) are disordered. The 43-residue stretch at 160 to 202 (TTSIGVKLLMKMGWRQGRSIRDAHADSLYESRREARKAFLALS) folds into the G-patch domain. The stretch at 408-450 (LIEGCAAMVARCGKHIEDFYKEKSKTNTQFNFLNEGDGCSYYA) is one SURP motif repeat. 4 disordered regions span residues 464–503 (QKPDTVQSKSSDKLTAENRGKILGERPLDRSTKSSSSSFP), 679–717 (TRTNEVESSSIAPQHTSVAGATETEAKGAATDPEIESSS), 775–806 (LGLDVPPEKPTPPNVLFRSETPSTANAIGISR), and 820–984 (ESAL…HHKR). The span at 473 to 495 (SSDKLTAENRGKILGERPLDRST) shows a compositional bias: basic and acidic residues. Positions 679–695 (TRTNEVESSSIAPQHTS) are enriched in polar residues. Positions 697-709 (AGATETEAKGAAT) are enriched in low complexity. A coiled-coil region spans residues 814 to 859 (QEIKENESALDKEEIANASADVPSDNVEELGLKYEKQEHRAEKSRS). The span at 843–858 (LGLKYEKQEHRAEKSR) shows a compositional bias: basic and acidic residues. Basic residues-rich tracts occupy residues 882–892 (SRERRSRHKIR), 905–922 (HRSKKRKSHSKHRTRRSR), and 934–946 (TKRKHREKRHHRT). Residues 947-974 (RNPDTDSSDHEYEERHKSSSRRSSDKDR) are compositionally biased toward basic and acidic residues. Basic residues predominate over residues 975–984 (SRRRSRHHKR).

It localises to the nucleus. Functionally, functions as a component of microRNA (miRNA) and small interfering RNA (siRNA) biogenesis. May assist Dicer-like (DCL) proteins to efficiently process and/or recruit the precursors of miRNAs and siRNAs. The chain is G patch domain-containing protein TGH homolog from Oryza sativa subsp. japonica (Rice).